Here is a 152-residue protein sequence, read N- to C-terminus: Large ribosomal subunit protein uL15 (152 aa).

Positions 1 to 79 are disordered; the sequence is MRLNELSPPP…GRHTPAHPKV (79 aa). Gly residues predominate over residues 22-35; sequence GEGSGYGKTSGRGQ.

The protein belongs to the universal ribosomal protein uL15 family. As to quaternary structure, part of the 50S ribosomal subunit.

Functionally, binds to the 23S rRNA. The polypeptide is Large ribosomal subunit protein uL15 (Rubrobacter xylanophilus (strain DSM 9941 / JCM 11954 / NBRC 16129 / PRD-1)).